The chain runs to 232 residues: Protein shisa-3 (232 aa).

The signal sequence occupies residues 1-19 (MRLLGCFFLIFLTWGSARA). The Lumenal portion of the chain corresponds to 20–93 (QGEYCHGWLD…GVSAQPVYVP (74 aa)). A helical membrane pass occupies residues 94–114 (FLIVGSIFIAFIIVGSLVAVY). Topologically, residues 115–232 (CCTCLRPKQT…NKSCPDFRQS (118 aa)) are cytoplasmic. Positions 146–185 (TSGNLRTPSRQSSTATSSTSTGGSVRRLSSSRADPGYLVS) are disordered. Residues 151–177 (RTPSRQSSTATSSTSTGGSVRRLSSSR) show a composition bias toward low complexity.

It belongs to the shisa family. Interacts with fzd8 and fgfr1.

Its subcellular location is the endoplasmic reticulum membrane. Plays an essential role in the maturation of presomitic mesoderm cells by individual attenuation of both fgf and wnt signaling. Regulates head and somite developmen. Inhibits both wnt and fgf signaling through the regulation of protein maturation and cell surface transportation of their receptors within the endoplasmic reticulum. This chain is Protein shisa-3 (shisa3), found in Xenopus laevis (African clawed frog).